Consider the following 127-residue polypeptide: Translation initiation factor 5A (127 aa).

Residue Lys-35 is modified to Hypusine.

It belongs to the eIF-5A family.

Its subcellular location is the cytoplasm. Functionally, functions by promoting the formation of the first peptide bond. This Methanothrix thermoacetophila (strain DSM 6194 / JCM 14653 / NBRC 101360 / PT) (Methanosaeta thermophila) protein is Translation initiation factor 5A (eIF5A).